Reading from the N-terminus, the 276-residue chain is Rhomboid protease GlpG (276 aa).

6 helical membrane passes run 94–114, 142–162, 169–189, 192–212, 229–249, and 250–270; these read GPVT…MQIL, ALMH…WYLG, LGSG…GYVQ, FSGP…GYVW, LIIF…GMSM, and ANGA…VDSL. Ser-201 serves as the catalytic Nucleophile. Residue His-254 is part of the active site.

It belongs to the peptidase S54 family.

The protein resides in the cell inner membrane. It carries out the reaction Cleaves type-1 transmembrane domains using a catalytic dyad composed of serine and histidine that are contributed by different transmembrane domains.. In terms of biological role, rhomboid-type serine protease that catalyzes intramembrane proteolysis. The polypeptide is Rhomboid protease GlpG (Escherichia coli (strain 55989 / EAEC)).